We begin with the raw amino-acid sequence, 271 residues long: Phosphatidylglycerol--prolipoprotein diacylglyceryl transferase (271 aa).

The next 4 helical transmembrane spans lie at 25–45 (WYGI…KFFV), 60–80 (YFIW…ILIY), 103–123 (FVGI…IATL), and 131–151 (ANPW…YVFG). R152 contacts a 1,2-diacyl-sn-glycero-3-phospho-(1'-sn-glycerol). The next 3 membrane-spanning stretches (helical) occupy residues 181–201 (PSQL…VYLA), 209–229 (GELI…CEFY), and 235–255 (GIGF…IMFI).

It belongs to the Lgt family.

It localises to the cell inner membrane. The enzyme catalyses L-cysteinyl-[prolipoprotein] + a 1,2-diacyl-sn-glycero-3-phospho-(1'-sn-glycerol) = an S-1,2-diacyl-sn-glyceryl-L-cysteinyl-[prolipoprotein] + sn-glycerol 1-phosphate + H(+). It functions in the pathway protein modification; lipoprotein biosynthesis (diacylglyceryl transfer). Catalyzes the transfer of the diacylglyceryl group from phosphatidylglycerol to the sulfhydryl group of the N-terminal cysteine of a prolipoprotein, the first step in the formation of mature lipoproteins. This is Phosphatidylglycerol--prolipoprotein diacylglyceryl transferase from Campylobacter jejuni (strain RM1221).